The primary structure comprises 1005 residues: Beta/gamma crystallin domain-containing protein 3 (1005 aa).

Phosphoserine occurs at positions 122, 129, 130, 136, and 140. 2 disordered regions span residues 132-159 (EDVL…PSSV) and 173-198 (NFDG…DWRT). A compositionally biased stretch (acidic residues) spans 180-189 (QEAEEEEEEA). Beta/gamma crystallin 'Greek key' domains lie at 367–416 (GCWI…KRVL), 462–500 (GVWL…HPLQ), 512–556 (LKVI…RVIG), 557–599 (GVWV…RYLQ), 605–647 (SSIT…HVKS), 648–690 (GVWV…RPIQ), 701–737 (HLLK…KVLR), 738–781 (GCWL…QPID), and 828–869 (GLWI…RPMK). Residues 871–1003 (PAVYIRIRNR…GEETQKWDIE (133 aa)) enclose the Ricin B-type lectin domain.

It belongs to the beta/gamma-crystallin family.

This Mus musculus (Mouse) protein is Beta/gamma crystallin domain-containing protein 3 (Crybg3).